Consider the following 585-residue polypeptide: Lipoprotein LpqB (585 aa).

The first 18 residues, methionine 1–glycine 18, serve as a signal peptide directing secretion. Cysteine 19 carries N-palmitoyl cysteine lipidation. Cysteine 19 carries S-diacylglycerol cysteine lipidation. The disordered stretch occupies residues serine 24 to threonine 46. A compositionally biased stretch (pro residues) spans proline 37–threonine 46.

The protein belongs to the LpqB lipoprotein family. In terms of assembly, interacts with MtrB, probably extracytoplasmically via its sensor domain.

It is found in the cell membrane. It localises to the secreted. The protein resides in the cell wall. Functionally, may modulate activity of the MtrAB system in controlling homeostasis of the cell wall and cell division. In Mycolicibacterium smegmatis (strain ATCC 700084 / mc(2)155) (Mycobacterium smegmatis), this protein is Lipoprotein LpqB.